A 1002-amino-acid polypeptide reads, in one-letter code: ToxR-activated gene A lipoprotein (1002 aa).

The signal sequence occupies residues 1–21 (MVVRYSLLMKVSFAILIFLVG). The N-palmitoyl cysteine moiety is linked to residue Cys22. A lipid anchor (S-diacylglycerol cysteine) is attached at Cys22. Positions 31 to 53 (DQYLTDPDISEQTKKPSRPIIDE) are disordered. The Fibronectin type-III domain occupies 45 to 139 (KPSRPIIDEK…KIEFITLNEI (95 aa)). The Peptidase M66 domain maps to 282–536 (ELIIQNIDLG…QDWLKNGAVV (255 aa)). His432 is a Zn(2+) binding site. Glu433 is a catalytic residue. Zn(2+) contacts are provided by His436 and His442.

Zn(2+) is required as a cofactor.

It is found in the cell membrane. The chain is ToxR-activated gene A lipoprotein (tagA) from Vibrio cholerae serotype O1 (strain ATCC 39315 / El Tor Inaba N16961).